A 35-amino-acid chain; its full sequence is VGPGGECGGRFGGCAGGQCCSRFGFCGSGPKYCAH.

The Chitin-binding type-1 domain maps to 4–35 (GGECGGRFGGCAGGQCCSRFGFCGSGPKYCAH). 3 disulfide bridges follow: Cys-7–Cys-20, Cys-14–Cys-26, and Cys-19–Cys-33.

Post-translationally, contains 3 disulfide bonds. Expressed in leaf, flower, stem and seed with highest expression in leaf (at protein level).

Its function is as follows. Has antifungal activity against A.niger (IC(50)=5.4 uM), B.sorokiniana (IC(50)=2.0 uM), B.cinerea (IC(50)=1.6 uM), F.solani (IC(50)=3.7 uM) and A.alternata (IC(50)=5.0 uM). Binds chitin in vitro. Has no antibacterial activity at concentrations up to 10 uM. The protein is Antimicrobial peptide 3 of Stellaria media (Common chickweed).